The primary structure comprises 138 residues: Phosphoribosyl-AMP cyclohydrolase (138 aa).

Residues 1 to 23 form a disordered region; the sequence is MSEQSAPSPTPAAELSSDPASPL. Asp-100 contacts Mg(2+). Cys-101 contributes to the Zn(2+) binding site. Mg(2+) contacts are provided by Asp-102 and Asp-104. Zn(2+) is bound by residues Cys-117 and Cys-124.

It belongs to the PRA-CH family. In terms of assembly, homodimer. Requires Mg(2+) as cofactor. It depends on Zn(2+) as a cofactor.

Its subcellular location is the cytoplasm. It carries out the reaction 1-(5-phospho-beta-D-ribosyl)-5'-AMP + H2O = 1-(5-phospho-beta-D-ribosyl)-5-[(5-phospho-beta-D-ribosylamino)methylideneamino]imidazole-4-carboxamide. The protein operates within amino-acid biosynthesis; L-histidine biosynthesis; L-histidine from 5-phospho-alpha-D-ribose 1-diphosphate: step 3/9. Catalyzes the hydrolysis of the adenine ring of phosphoribosyl-AMP. This is Phosphoribosyl-AMP cyclohydrolase from Paenarthrobacter aurescens (strain TC1).